The following is a 1400-amino-acid chain: DNA topoisomerase 2 (1400 aa).

Positions 1–30 (MSSFESDSASDAESAFSDASSDFTPSSSVK) are enriched in low complexity. Residues 1-57 (MSSFESDSASDAESAFSDASSDFTPSSSVKSKGKVPLRDSTNTTAQPSAPATGDASD) form a disordered region. Positions 39–57 (DSTNTTAQPSAPATGDASD) are enriched in polar residues. ATP contacts are provided by residues Asn-117, Asn-146, 174-176 (SSN), and 187-194 (GRNGYGAK). The segment at 379–386 (TKKEKGKK) is interaction with DNA. 415–417 (QTK) is a binding site for ATP. The 117-residue stretch at 497-613 (CTLILTEGDS…GLLEIPGFLL (117 aa)) folds into the Toprim domain. The Mg(2+) site is built by Glu-503, Asp-582, and Asp-584. The 466-residue stretch at 749-1214 (IPSILDGFKP…SAKDLWNSDL (466 aa)) folds into the Topo IIA-type catalytic domain. Catalysis depends on Tyr-839, which acts as the O-(5'-phospho-DNA)-tyrosine intermediate. The tract at residues 1019–1028 (KLISSISLSN) is interaction with DNA. The interval 1235–1400 (FGPTAKTSTR…NESDEDYMSE (166 aa)) is disordered. The span at 1262 to 1271 (SSTPKASTPT) shows a compositional bias: low complexity. Residues 1312-1321 (PKRKTPKSKP) are compositionally biased toward basic residues. Residues 1389–1400 (DGNESDEDYMSE) are compositionally biased toward acidic residues.

Belongs to the type II topoisomerase family. As to quaternary structure, homodimer. Requires Mg(2+) as cofactor. The cofactor is Mn(2+). It depends on Ca(2+) as a cofactor.

Its subcellular location is the nucleus. The enzyme catalyses ATP-dependent breakage, passage and rejoining of double-stranded DNA.. Control of topological states of DNA by transient breakage and subsequent rejoining of DNA strands. Topoisomerase II makes double-strand breaks. This is DNA topoisomerase 2 (TOP2) from Meyerozyma guilliermondii (strain ATCC 6260 / CBS 566 / DSM 6381 / JCM 1539 / NBRC 10279 / NRRL Y-324) (Yeast).